We begin with the raw amino-acid sequence, 924 residues long: Autophagy-related protein 9B (924 aa).

Residues 1 to 144 (MVSRMGWGGR…QDSPGLRVGP (144 aa)) form a disordered region. The Cytoplasmic portion of the chain corresponds to 1–207 (MVSRMGWGGR…KIYSYHQRNG (207 aa)). The segment covering 17 to 27 (WGDLGPGSVPL) has biased composition (low complexity). Pro residues predominate over residues 28–40 (LPMPLPPPPPPSC). Residues 78 to 88 (LQGTGASQSCH) show a composition bias toward polar residues. The span at 98–113 (PTQAQPAMTPASASPS) shows a compositional bias: low complexity. The Tyrosine-based sorting signal signature appears at 151-154 (YERL). Residues 208 to 228 (FACILLEDVFQLGQFIFIVTF) traverse the membrane as a helical segment. The Lumenal segment spans residues 229 to 276 (TTFLLRCVDYNVLFANQPSNHTRPGPFHSKVTLSDAILPSAQCAERIR). A helical transmembrane segment spans residues 277-297 (SSPLLVLLLVLAAGFWLVQLL). The Cytoplasmic portion of the chain corresponds to 298–438 (RSVCNLFSYW…GALAARWGRT (141 aa)). Residues 439–459 (VLLLAALNLALSPLVLAWQVL) lie within the membrane without spanning it. Topologically, residues 460–526 (HVFYSHVELL…AAPPAPLRTL (67 aa)) are cytoplasmic. The chain crosses the membrane as a helical span at residues 527–547 (LARQLVFFAGALFAALLVLTV). The Lumenal portion of the chain corresponds to 548–551 (YDED). Residues 552 to 572 (VLAVEHVLTAMTALGVTATVA) traverse the membrane as a helical segment. Residues 573–624 (RSFIPEEQCQGRAPQLLLQTALAHMHYLPEEPGPGGRDRAYRQMAQLLQYRA) lie on the Cytoplasmic side of the membrane. An intramembrane segment occupies 625 to 645 (VSLLEELLSPLLTPLFLLFWF). The Cytoplasmic portion of the chain corresponds to 646–924 (RPRALEIIDF…KEPDRASCTD (279 aa)). Residues 847–924 (QQEPWGEAAA…KEPDRASCTD (78 aa)) are disordered. A compositionally biased stretch (low complexity) spans 878–890 (SWSSDGSSPASSP). Residues 913 to 924 (TQKEPDRASCTD) are compositionally biased toward basic and acidic residues.

It belongs to the ATG9 family. Homotrimer; forms a homotrimer with a central pore that forms a path between the two membrane leaflets. Highly expressed in placenta (trophoblast cells) and pituitary gland. Not expressed in vascular endothelial.

Its subcellular location is the preautophagosomal structure membrane. It carries out the reaction a 1,2-diacyl-sn-glycero-3-phosphocholine(in) = a 1,2-diacyl-sn-glycero-3-phosphocholine(out). It catalyses the reaction a 1,2-diacyl-sn-glycero-3-phospho-L-serine(in) = a 1,2-diacyl-sn-glycero-3-phospho-L-serine(out). The enzyme catalyses a 1,2-diacyl-sn-glycero-3-phosphoethanolamine(in) = a 1,2-diacyl-sn-glycero-3-phosphoethanolamine(out). In terms of biological role, phospholipid scramblase involved in autophagy by mediating autophagosomal membrane expansion. Cycles between the preautophagosomal structure/phagophore assembly site (PAS) and the cytoplasmic vesicle pool and supplies membrane for the growing autophagosome. Lipid scramblase activity plays a key role in preautophagosomal structure/phagophore assembly by distributing the phospholipids that arrive through ATG2 (ATG2A or ATG2B) from the cytoplasmic to the luminal leaflet of the bilayer, thereby driving autophagosomal membrane expansion. In addition to autophagy, also plays a role in necrotic cell death. The sequence is that of Autophagy-related protein 9B (ATG9B) from Homo sapiens (Human).